Here is a 40-residue protein sequence, read N- to C-terminus: Alpha-1B-glycoprotein (40 aa).

Asparagine 23 carries N-linked (GlcNAc...) asparagine glycosylation.

In terms of assembly, interacts with CRISP3. In terms of tissue distribution, plasma.

The protein resides in the secreted. The polypeptide is Alpha-1B-glycoprotein (A1BG) (Sus scrofa (Pig)).